The sequence spans 65 residues: Photosystem II reaction center protein J (65 aa).

Residues 1–17 (MSTKLKGPDGRIPDRLP) are compositionally biased toward basic and acidic residues. The interval 1 to 20 (MSTKLKGPDGRIPDRLPDGT) is disordered. A helical membrane pass occupies residues 36-56 (LWLVATVGGMAVLSVLGLFFF).

This sequence belongs to the PsbJ family. PSII is composed of 1 copy each of membrane proteins PsbA, PsbB, PsbC, PsbD, PsbE, PsbF, PsbH, PsbI, PsbJ, PsbK, PsbL, PsbM, PsbT, PsbX, PsbY, Psb30/Ycf12, peripheral proteins PsbO, CyanoQ (PsbQ), PsbU, PsbV and a large number of cofactors. It forms dimeric complexes.

Its subcellular location is the cellular thylakoid membrane. In terms of biological role, one of the components of the core complex of photosystem II (PSII). PSII is a light-driven water:plastoquinone oxidoreductase that uses light energy to abstract electrons from H(2)O, generating O(2) and a proton gradient subsequently used for ATP formation. It consists of a core antenna complex that captures photons, and an electron transfer chain that converts photonic excitation into a charge separation. In Prochlorococcus marinus (strain MIT 9303), this protein is Photosystem II reaction center protein J.